The primary structure comprises 95 residues: Aspartyl/glutamyl-tRNA(Asn/Gln) amidotransferase subunit C (95 aa).

The protein belongs to the GatC family. Heterotrimer of A, B and C subunits.

It carries out the reaction L-glutamyl-tRNA(Gln) + L-glutamine + ATP + H2O = L-glutaminyl-tRNA(Gln) + L-glutamate + ADP + phosphate + H(+). The catalysed reaction is L-aspartyl-tRNA(Asn) + L-glutamine + ATP + H2O = L-asparaginyl-tRNA(Asn) + L-glutamate + ADP + phosphate + 2 H(+). Functionally, allows the formation of correctly charged Asn-tRNA(Asn) or Gln-tRNA(Gln) through the transamidation of misacylated Asp-tRNA(Asn) or Glu-tRNA(Gln) in organisms which lack either or both of asparaginyl-tRNA or glutaminyl-tRNA synthetases. The reaction takes place in the presence of glutamine and ATP through an activated phospho-Asp-tRNA(Asn) or phospho-Glu-tRNA(Gln). This chain is Aspartyl/glutamyl-tRNA(Asn/Gln) amidotransferase subunit C, found in Syntrophotalea carbinolica (strain DSM 2380 / NBRC 103641 / GraBd1) (Pelobacter carbinolicus).